We begin with the raw amino-acid sequence, 147 residues long: UPAR/Ly6 domain-containing protein CG9338 (147 aa).

Positions 1–23 are cleaved as a signal peptide; that stretch reads MVSSVKMILALTVLATVACTGYA. Topologically, residues 24–126 are extracellular; that stretch reads IKCYQCDSLT…VCTEDECNGT (103 aa). 5 disulfide bridges follow: C26–C72, C29–C37, C51–C89, C101–C115, and C118–C123. N68 is a glycosylation site (N-linked (GlcNAc...) asparagine). The GPI-anchor amidated asparagine moiety is linked to residue N124. The propeptide at 125-147 is removed in mature form; the sequence is GTSSLAPIAGVILLFFGLARLLA. The chain crosses the membrane as a helical span at residues 127–147; it reads SSLAPIAGVILLFFGLARLLA.

It belongs to the quiver family.

The protein resides in the cell membrane. Its function is as follows. May be involved in regulating neuron excitability. This is UPAR/Ly6 domain-containing protein CG9338 from Drosophila melanogaster (Fruit fly).